The chain runs to 382 residues: Lipid-A-disaccharide synthase (382 aa).

Belongs to the LpxB family.

The enzyme catalyses 2-N,3-O-bis[(3R)-3-hydroxytetradecanoyl]-alpha-D-glucosaminyl 1-phosphate + UDP-2-N,3-O-bis[(3R)-3-hydroxytetradecanoyl]-alpha-D-glucosamine = lipid A disaccharide (E. coli) + UDP + H(+). It catalyses the reaction a lipid X + a UDP-2-N,3-O-bis[(3R)-3-hydroxyacyl]-alpha-D-glucosamine = a lipid A disaccharide + UDP + H(+). Its pathway is glycolipid biosynthesis; lipid IV(A) biosynthesis; lipid IV(A) from (3R)-3-hydroxytetradecanoyl-[acyl-carrier-protein] and UDP-N-acetyl-alpha-D-glucosamine: step 5/6. In terms of biological role, condensation of UDP-2,3-diacylglucosamine and 2,3-diacylglucosamine-1-phosphate to form lipid A disaccharide, a precursor of lipid A, a phosphorylated glycolipid that anchors the lipopolysaccharide to the outer membrane of the cell. The protein is Lipid-A-disaccharide synthase of Salmonella typhimurium (strain LT2 / SGSC1412 / ATCC 700720).